Here is a 165-residue protein sequence, read N- to C-terminus: uncharacterized protein (165 aa).

The segment at 49–165 (QLKPQGPKRP…VAQQREIAQK (117 aa)) is disordered. Residues 94 to 106 (MNNNNNYKISYTS) show a composition bias toward polar residues. Low complexity predominate over residues 120–135 (TLQRTTPQAQPTPQQP). Positions 139–157 (SRSSGGITGAVNNRPQMVA) are enriched in polar residues.

This is an uncharacterized protein from Caenorhabditis elegans.